We begin with the raw amino-acid sequence, 210 residues long: uncharacterized protein (210 aa).

This is an uncharacterized protein from Dictyostelium discoideum (Social amoeba).